Here is a 608-residue protein sequence, read N- to C-terminus: Elongation factor 4 (608 aa).

The region spanning 11-193 (SHIRNFSIVA…AIVHKLPAPK (183 aa)) is the tr-type G domain. GTP contacts are provided by residues 23–28 (DHGKST) and 140–143 (NKID).

It belongs to the TRAFAC class translation factor GTPase superfamily. Classic translation factor GTPase family. LepA subfamily.

The protein resides in the cell inner membrane. It catalyses the reaction GTP + H2O = GDP + phosphate + H(+). In terms of biological role, required for accurate and efficient protein synthesis under certain stress conditions. May act as a fidelity factor of the translation reaction, by catalyzing a one-codon backward translocation of tRNAs on improperly translocated ribosomes. Back-translocation proceeds from a post-translocation (POST) complex to a pre-translocation (PRE) complex, thus giving elongation factor G a second chance to translocate the tRNAs correctly. Binds to ribosomes in a GTP-dependent manner. The protein is Elongation factor 4 of Rhizobium meliloti (strain 1021) (Ensifer meliloti).